The primary structure comprises 366 residues: Homer protein homolog 1 (366 aa).

The residue at position 2 (G2) is an N-acetylglycine. Positions 2-110 constitute a WH1 domain; the sequence is GEQPIFSTRA…EKFQEFKEAA (109 aa). The tract at residues 114-189 is disordered; the sequence is KEKSQEKMEL…RTQALSHASS (76 aa). Composition is skewed to polar residues over residues 138–147 and 155–170; these read SPLTPESING and DVTQ…TQNA. Residues 193–364 are a coiled coil; sequence KHWEAELATL…LRDNLAKLLE (172 aa). The interval 302–366 is required for tetramerization; sequence KLQEVEIRNK…DNLAKLLECS (65 aa). Residue S318 is modified to Phosphoserine.

This sequence belongs to the Homer family. As to quaternary structure, tetramer; this tetrameric structure is critical for forming the high-order complex with SHANK1, which in turn is necessary for the structural and functional integrity of dendritic spines. Isoform 1, isoform 2 and isoform 3 encode a coiled-coil structure that mediates homo- and heteromultimerization. Interacts with GRM1, GRM5, ITPR1, DNM3, RYR1, RYR2 and SHANK3. Interacts with IFT57 and OPHN1. Interacts with SHANK1; forms high-order polymerized complex with a mesh-like network structure, at least composed of SHANK1, HOMER1 and DLGAP1; the complex formation is SHANK1 multimerization dependent. Interacts with NFATC4. Interacts with DAGLA (via PPXXF motif); this interaction is required for the cell membrane localization of DAGLA. Interacts with SRGAP2. In terms of tissue distribution, expressed in skeletal muscle at the level of the Z line, in the forebrain and cerebellum. As to expression, expressed in cardiac and skeletal muscle. Expressed in the hippocampus. In terms of tissue distribution, expressed in skeletal muscle at the level of the Z line, in the heart, forebrain and cerebellum.

It localises to the cytoplasm. Its subcellular location is the postsynaptic density. The protein localises to the synapse. It is found in the cell projection. The protein resides in the dendritic spine. In terms of biological role, postsynaptic density scaffolding protein. Binds and cross-links cytoplasmic regions of GRM1, GRM5, ITPR1, DNM3, RYR1, RYR2, SHANK1 and SHANK3. By physically linking GRM1 and GRM5 with ER-associated ITPR1 receptors, it aids the coupling of surface receptors to intracellular calcium release. May also couple GRM1 to PI3 kinase through its interaction with AGAP2. Isoform 1 regulates the trafficking and surface expression of GRM5. Differentially regulates the functions of the calcium activated channel ryanodine receptors RYR1 and RYR2. Isoform 1 decreases the activity of RYR2, and increases the activity of RYR1, whereas isoform 5 counteracts the effects by competing for binding sites. Isoform 3 regulates the trafficking and surface expression of GRM5. Isoform 5 acts as a natural dominant negative, in dynamic competition with constitutively expressed isoform 1, isoform 2 and isoform 3 to regulate synaptic metabotropic glutamate function. Isoform 5, may be involved in the structural changes that occur at synapses during long-lasting neuronal plasticity and development. Forms a high-order complex with SHANK1, which in turn is necessary for the structural and functional integrity of dendritic spines. Negatively regulates T cell activation by inhibiting the calcineurin-NFAT pathway. Acts by competing with calcineurin/PPP3CA for NFAT protein binding, hence preventing NFAT activation by PPP3CA. This Mus musculus (Mouse) protein is Homer protein homolog 1.